Here is a 263-residue protein sequence, read N- to C-terminus: Norsolorinic acid ketoreductase stcE (263 aa).

Residues Leu-29, Asp-76, Asn-105, Tyr-177, Lys-181, Ile-208, and Ser-210 each coordinate NADP(+). The Proton donor role is filled by Tyr-177. Lys-181 serves as the catalytic Lowers pKa of active site Tyr.

It belongs to the short-chain dehydrogenases/reductases (SDR) family.

The enzyme catalyses (1'S)-averantin + NADP(+) = norsolorinic acid + NADPH + H(+). It participates in mycotoxin biosynthesis; sterigmatocystin biosynthesis. Short chain dehydrogenase; part of the gene cluster that mediates the biosynthesis of sterigmatocystin (ST), a polyketide-derived furanocoumarin which is part of the most toxic and carcinogenic compounds among the known mycotoxins. The first step in the biosynthesis of sterigmatocystin is the production of hexanoate by the fatty acid synthase (FAS) units stcJ and stcK. The polyketide backbone is assembled by the non-reducing polyketide synthase stcA by condensation of the starter hexanoyl-CoA and 7 malonyl-CoA extender units followed by cyclization and release of norsolorinic acid. Norsolorinic acid is the first stable intermediate in the biosynthesis of sterigmatocystin and is converted into averantin (AVN) by the ketoreductase stcE which reduces the hexanoate ketone to an alcohol. Averantin is then oxidized into 5'-hydroxyaverantin (HAVN) by the cytochrome P450 monooxygenase stcF. 5'-hydroxyaverantin is further converted to 5'-oxyaverantin (OAVN) by the 5'-hydroxyaverantin dehydrogenase stcG. The next step is the conversion of OAVN into averufin (AVF) which is catalyzed by a yet to be identified enzyme. The cytochrome P450 monooxygenase stcB and the flavin-binding monooxygenase stcW are both required for the conversion of averufin to 1-hydroxyversicolorone. The esterase stcI probably catalyzes the formation of versiconal hemiacetal acetate from 1-hydroxyversicolorone. The oxydoreductase stcN then probably catalyzes the biosynthetic step from versiconal to versicolorin B (VERB). The next step is performed by the versicolorin B desaturase stcL to produce versicolorin A (VERA). The ketoreductase stcU and the cytochrome P450 monooxygenase stcS are involved in the conversion of versicolorin A to demethylsterigmatocystin. The Baeyer-Villiger oxidas stcQ and the reductase stcR might be involved in the biosynthetic step from versicolorin A to demethylsterigmatocystin. The final step in the biosynthesis of sterigmatocystin is the methylation of demethylsterigmatocystin catalyzed by the methyltransferase stcP. The sequence is that of Norsolorinic acid ketoreductase stcE from Emericella nidulans (strain FGSC A4 / ATCC 38163 / CBS 112.46 / NRRL 194 / M139) (Aspergillus nidulans).